The sequence spans 101 residues: Phosphoribosyl-AMP cyclohydrolase (101 aa).

Position 71 (Asp-71) interacts with Mg(2+). Cys-72 serves as a coordination point for Zn(2+). Positions 73 and 75 each coordinate Mg(2+). 2 residues coordinate Zn(2+): Cys-88 and Cys-95.

Belongs to the PRA-CH family. Homodimer. The cofactor is Mg(2+). Zn(2+) is required as a cofactor.

It localises to the cytoplasm. The enzyme catalyses 1-(5-phospho-beta-D-ribosyl)-5'-AMP + H2O = 1-(5-phospho-beta-D-ribosyl)-5-[(5-phospho-beta-D-ribosylamino)methylideneamino]imidazole-4-carboxamide. Its pathway is amino-acid biosynthesis; L-histidine biosynthesis; L-histidine from 5-phospho-alpha-D-ribose 1-diphosphate: step 3/9. In terms of biological role, catalyzes the hydrolysis of the adenine ring of phosphoribosyl-AMP. The polypeptide is Phosphoribosyl-AMP cyclohydrolase (Bacillus cereus (strain ATCC 14579 / DSM 31 / CCUG 7414 / JCM 2152 / NBRC 15305 / NCIMB 9373 / NCTC 2599 / NRRL B-3711)).